The sequence spans 294 residues: Elongation factor Ts (294 aa).

Positions 80–83 (TDFV) are involved in Mg(2+) ion dislocation from EF-Tu.

The protein belongs to the EF-Ts family.

It localises to the cytoplasm. Its function is as follows. Associates with the EF-Tu.GDP complex and induces the exchange of GDP to GTP. It remains bound to the aminoacyl-tRNA.EF-Tu.GTP complex up to the GTP hydrolysis stage on the ribosome. This is Elongation factor Ts from Polynucleobacter asymbioticus (strain DSM 18221 / CIP 109841 / QLW-P1DMWA-1) (Polynucleobacter necessarius subsp. asymbioticus).